The following is a 1941-amino-acid chain: Myosin-2 (1941 aa).

Residues 33 to 82 (DAKTSVFVAEPKESFVKGTIQSREGGKVTVKTEGGATLTVKDDQVFPMNP) form the Myosin N-terminal SH3-like domain. Phosphothreonine is present on residues threonine 64 and threonine 69. Residues 86 to 784 (DKIEDMAMMT…LLGLLEEMRD (699 aa)) enclose the Myosin motor domain. An N6,N6,N6-trimethyllysine modification is found at lysine 130. 179-186 (GESGAGKT) lines the ATP pocket. Tyrosine 389 is modified (phosphotyrosine). A Phosphoserine modification is found at serine 392. Threonine 419 carries the phosphothreonine modification. Residue serine 625 is modified to Phosphoserine. The tract at residues 661-683 (LNKLMTNLRSTHPHFVRCIIPNE) is actin-binding. Position 759 is a pros-methylhistidine (histidine 759). The actin-binding stretch occupies residues 763–777 (KFGHTKVFFKAGLLG). The region spanning 787–816 (LAQLITRTQARCRGFLARVEYQRMVERREA) is the IQ domain. A coiled-coil region spans residues 845–1941 (LLKSAETEKE…EVHTKVISEE (1097 aa)). Phosphoserine is present on residues serine 1094 and serine 1098. Disordered regions lie at residues 1128–1149 (IEAE…SREL) and 1155–1174 (RLEE…KKRE). Residues 1130–1149 (AERASRAKAEKQRSDLSREL) show a composition bias toward basic and acidic residues. 2 positions are modified to phosphoserine: serine 1164 and serine 1239. Threonine 1243 bears the Phosphothreonine mark. Serine 1245 is modified (phosphoserine). A Phosphothreonine modification is found at threonine 1257. Serine 1263 bears the Phosphoserine mark. Threonine 1288 bears the Phosphothreonine mark. Phosphoserine is present on residues serine 1290, serine 1294, serine 1305, and serine 1308. The residue at position 1469 (threonine 1469) is a Phosphothreonine. Residue serine 1476 is modified to Phosphoserine. The residue at position 1494 (tyrosine 1494) is a Phosphotyrosine. Phosphoserine is present on serine 1497. A Phosphothreonine modification is found at threonine 1503. Serine 1516 is subject to Phosphoserine. Residue threonine 1519 is modified to Phosphothreonine. Phosphoserine is present on residues serine 1556, serine 1576, serine 1602, serine 1605, serine 1716, and serine 1728. Residues threonine 1732 and threonine 1738 each carry the phosphothreonine modification. Serine 1741 carries the post-translational modification Phosphoserine.

This sequence belongs to the TRAFAC class myosin-kinesin ATPase superfamily. Myosin family. As to quaternary structure, muscle myosin is a hexameric protein that consists of 2 heavy chain subunits (MHC), 2 alkali light chain subunits (MLC) and 2 regulatory light chain subunits (MLC-2). Interacts with GCSAM.

The protein localises to the cytoplasm. It is found in the myofibril. Its function is as follows. Myosins are actin-based motor molecules with ATPase activity essential for muscle contraction. This Homo sapiens (Human) protein is Myosin-2.